Here is a 183-residue protein sequence, read N- to C-terminus: uncharacterized protein (183 aa).

An N-terminal signal peptide occupies residues 1–17; the sequence is MVLFILVLYTCIQDGNG.

This is an uncharacterized protein from Saccharomyces cerevisiae (strain ATCC 204508 / S288c) (Baker's yeast).